The primary structure comprises 742 residues: Synaptic vesicle glycoprotein 2A (742 aa).

The tract at residues 1-57 (MEEGFRDRAAFIRGAKDIAKEVKKHAAKKVVKGLDRVQDEYSRRSYSRFEEEDDDDD) is interaction with SYT1. The Cytoplasmic portion of the chain corresponds to 1–169 (MEEGFRDRAA…SHGRFQWTLY (169 aa)). The segment covering 40–49 (EYSRRSYSRF) has biased composition (basic and acidic residues). A disordered region spans residues 40–144 (EYSRRSYSRF…GRGEAQRRKE (105 aa)). 2 positions are modified to phosphoserine: Ser80 and Ser81. Thr84 bears the Phosphothreonine mark. The segment covering 122–137 (VRGGLSDGEGPPGGRG) has biased composition (gly residues). Ser127 is subject to Phosphoserine. Residues 170–190 (FVLGLALMADGVEVFVVGFVL) traverse the membrane as a helical segment. The Extracellular segment spans residues 191-205 (PSAEKDMCLSDSNKG). A helical transmembrane segment spans residues 206–226 (MLGLIVYLGMMVGAFLWGGLA). Over 227 to 233 (DRLGRRQ) the chain is Cytoplasmic. The helical transmembrane segment at 234 to 254 (CLLISLSVNSVFAFFSSFVQG) threads the bilayer. Residues 255–262 (YGTFLFCR) lie on the Extracellular side of the membrane. The chain crosses the membrane as a helical span at residues 263–283 (LLSGVGIGGSIPIVFSYFSEF). At 284-294 (LAQEKRGEHLS) the chain is on the cytoplasmic side. A helical membrane pass occupies residues 295 to 315 (WLCMFWMIGGVYAAAMAWAII). Residues 316-334 (PHYGWSFQMGSAYQFHSWR) are Extracellular-facing. A helical transmembrane segment spans residues 335–355 (VFVLVCAFPSVFAIGALTTQP). Over 356–447 (ESPRFFLENG…CFGPEYRRIT (92 aa)) the chain is Cytoplasmic. Residue Ser393 is modified to Phosphoserine. The chain crosses the membrane as a helical span at residues 448 to 468 (LMMMGVWFTMSFSYYGLTVWF). The Extracellular segment spans residues 469 to 598 (PDMIRHLQAV…GTGEGAYMVY (130 aa)). Tyr480 is subject to Phosphotyrosine. N-linked (GlcNAc...) asparagine glycans are attached at residues Asn498, Asn548, and Asn573. Residues 599–619 (FVSFLGTLAVLPGNIVSALLM) form a helical membrane-spanning segment. Residues 620 to 626 (DKIGRLR) are Cytoplasmic-facing. A helical transmembrane segment spans residues 627–647 (MLAGSSVMSCVSCFFLSFGNS). Topologically, residues 648–651 (ESAM) are extracellular. A helical membrane pass occupies residues 652 to 672 (IALLCLFGGVSIASWNALDVL). Residues 673 to 685 (TVELYPSDKRTTA) are Cytoplasmic-facing. The chain crosses the membrane as a helical span at residues 686-708 (FGFLNALCKLAAVLGISIFTSFV). Topologically, residues 709-712 (GITK) are extracellular. Residues 713 to 731 (AAPILFASAALALGSSLAL) traverse the membrane as a helical segment. Residues 732-742 (KLPETRGQVLQ) are Cytoplasmic-facing.

It belongs to the major facilitator superfamily. In terms of assembly, interacts with SYT1/synaptotagmin-1 in a calcium-dependent manner. Binds the adapter protein complex AP-2. Post-translationally, phosphorylation by CK1 of the N-terminal cytoplasmic domain regulates interaction with SYT1. In terms of processing, N-glycosylated.

It is found in the presynapse. It localises to the cytoplasmic vesicle. The protein resides in the secretory vesicle. Its subcellular location is the synaptic vesicle membrane. Its function is as follows. Plays a role in the control of regulated secretion in neural and endocrine cells, enhancing selectively low-frequency neurotransmission. Positively regulates vesicle fusion by maintaining the readily releasable pool of secretory vesicles. The chain is Synaptic vesicle glycoprotein 2A (SV2A) from Pongo abelii (Sumatran orangutan).